The sequence spans 310 residues: Vomeronasal type-1 receptor 44 (310 aa).

The Extracellular portion of the chain corresponds to 1-20 (MNKANLLHIDTNIKITLLAE). The chain crosses the membrane as a helical span at residues 21-41 (VSVGISANSILFIAYLCMLLG). Residues 42 to 50 (ENRHKPIDL) are Cytoplasmic-facing. Residues 51-71 (YIAFLSLTQLMLLITMGLIAV) form a helical membrane-spanning segment. The Extracellular segment spans residues 72–93 (DMFMPWGRWDSTTCQSLIYLHR). An intrachain disulfide couples cysteine 85 to cysteine 172. The helical transmembrane segment at 94-114 (FLRGLTLCATCLLNVLWTITL) threads the bilayer. Residues 115 to 131 (SSRNSCLAKFKHKYPHH) are Cytoplasmic-facing. The chain crosses the membrane as a helical span at residues 132 to 152 (ISGAFLFLCVLYMSFSSHFLV). The Extracellular portion of the chain corresponds to 153-190 (SMTVTPNLTSENFMYVTQSCSLLPMSYSRTSMFSTPVA). A glycan (N-linked (GlcNAc...) asparagine) is linked at asparagine 159. The chain crosses the membrane as a helical span at residues 191–211 (IRETFLISLMALSSGYMVALL). Over 212–238 (WRHKKQAQHLRSTSLSSKASPEQRATR) the chain is Cytoplasmic. The chain crosses the membrane as a helical span at residues 239–259 (TILLLMSFFVVFYILDTVIFH). The Extracellular portion of the chain corresponds to 260 to 268 (SRMKFKDGS). A helical transmembrane segment spans residues 269–289 (ILYCFQIIVSHSYVTVSPFVF). Residues 290–310 (ICTEKHIIKFLRSMCGRIANI) lie on the Cytoplasmic side of the membrane.

This sequence belongs to the G-protein coupled receptor 1 family.

The protein localises to the cell membrane. In terms of biological role, putative pheromone receptor implicated in the regulation of social and reproductive behavior. The polypeptide is Vomeronasal type-1 receptor 44 (Vmn1r44) (Mus musculus (Mouse)).